A 1113-amino-acid polypeptide reads, in one-letter code: Antigenic protein P1 (1113 aa).

A helical transmembrane segment spans residues Ile7–Val27. N-linked (GlcNAc...) asparagine glycans are attached at residues Asn121, Asn207, Asn225, Asn233, Asn274, Asn533, Asn576, Asn622, Asn675, Asn679, Asn730, Asn753, Asn880, Asn899, Asn907, Asn972, and Asn995. One can recognise a Peptidase M60 domain in the interval Val159–Gly473. The 153-residue stretch at Leu648–Lys800 folds into the PA14 domain.

It localises to the membrane. This is Antigenic protein P1 from Entamoeba histolytica (strain ATCC 30459 / HM-1:IMSS / ABRM).